The chain runs to 871 residues: Probable inorganic carbon transporter subunit DabA (871 aa).

Zn(2+)-binding residues include Cys396, Asp398, His577, and Cys592.

It belongs to the inorganic carbon transporter (TC 9.A.2) DabA family. In terms of assembly, forms a complex with DabB. Requires Zn(2+) as cofactor.

It localises to the cell membrane. In terms of biological role, part of an energy-coupled inorganic carbon pump. The chain is Probable inorganic carbon transporter subunit DabA from Bacillus subtilis (strain 168).